The primary structure comprises 584 residues: Transcriptional regulator STP2 (584 aa).

Polar residues-rich tracts occupy residues 1–11 (MSVAITSNNNK) and 180–202 (AESN…SISD). Disordered stretches follow at residues 1 to 22 (MSVA…PHLK) and 161 to 214 (KMHP…STVS). The span at 203–214 (SPSHSETESTVS) shows a compositional bias: low complexity. A C2H2-type zinc finger spans residues 225–247 (FKCPSCDAEFRVRGYLTRHMKKH). 2 disordered regions span residues 381-496 (RQKK…PQQP) and 553-584 (QYQP…SMYF). Positions 394 to 407 (SESSIQSQESESSI) are enriched in low complexity. The span at 431 to 441 (QHQHQHHHHVQ) shows a compositional bias: basic residues. A compositionally biased stretch (low complexity) spans 442 to 480 (NQHQQHVNQQQSIATPASIYSSSASSTSSYESTHSPYTP). Polar residues predominate over residues 481 to 496 (QSSRSPLSHMYNPQQP).

Proteolytically cleaved: activated by the amino acid-induced proteolytic removal of an N-terminal inhibitory domain.

Its subcellular location is the cell membrane. It is found in the nucleus. Transcription factor involved in the regulation of gene expression in response to extracellular amino acid levels. Synthesized as latent cytoplasmic precursor, which, upon a signal initiated by the plasma membrane SPS amino acid sensor system (including CSY1 and CSH3), becomes proteolytically activated and relocates to the nucleus, where it induces the expression of SPS-sensor-regulated genes. Required for efficient alkalinization through the release of ammonia from the cells produced during the breakdown of amino acids, and subsequent switch to the hyphal form. This Candida albicans (strain SC5314 / ATCC MYA-2876) (Yeast) protein is Transcriptional regulator STP2 (STP2).